The chain runs to 262 residues: tRNA pseudouridine synthase A (262 aa).

The active-site Nucleophile is D51. Y106 contacts substrate.

Belongs to the tRNA pseudouridine synthase TruA family.

The catalysed reaction is uridine(38/39/40) in tRNA = pseudouridine(38/39/40) in tRNA. Functionally, formation of pseudouridine at positions 38, 39 and 40 in the anticodon stem and loop of transfer RNAs. The polypeptide is tRNA pseudouridine synthase A (Pyrococcus horikoshii (strain ATCC 700860 / DSM 12428 / JCM 9974 / NBRC 100139 / OT-3)).